The sequence spans 126 residues: Calcitonin receptor-stimulating peptide 1 (126 aa).

Residues Met1–Thr25 form the signal peptide. A propeptide spanning residues Ala26 to Gln78 is cleaved from the precursor. Cys82 and Cys87 are disulfide-bonded. At Gly118 the chain carries Glycine amide. The propeptide occupies Asn123 to Ile126.

Mainly expressed in the thyroid gland and CNS. Found in the nerve cells of cerebrum, hippocampus, hypothalamus, pons/midbrain and thalamus.

It localises to the secreted. Functionally, stimulates cAMP production in porcine kidney cell line LLC-PK1 via the calcitonin receptor (CT) but not via the CT-like (CL) receptor. This Sus scrofa (Pig) protein is Calcitonin receptor-stimulating peptide 1 (CRSP1).